We begin with the raw amino-acid sequence, 316 residues long: L-lactate dehydrogenase 1 (316 aa).

Residues Val-17, Asp-38, Lys-43, and Tyr-69 each coordinate NAD(+). Substrate is bound by residues Arg-92 and 124-127 (NPVD). NAD(+) contacts are provided by residues 122-124 (VSN) and Thr-147. 152-155 (DTSR) contributes to the substrate binding site. His-179 serves as the catalytic Proton acceptor. Thr-234 serves as a coordination point for substrate.

The protein belongs to the LDH/MDH superfamily. LDH family. In terms of assembly, homotetramer.

The protein resides in the cytoplasm. The enzyme catalyses (S)-lactate + NAD(+) = pyruvate + NADH + H(+). Its pathway is fermentation; pyruvate fermentation to lactate; (S)-lactate from pyruvate: step 1/1. In terms of biological role, catalyzes the conversion of lactate to pyruvate. The chain is L-lactate dehydrogenase 1 from Bifidobacterium longum subsp. longum (strain ATCC 15707 / DSM 20219 / JCM 1217 / NCTC 11818 / E194b).